A 501-amino-acid chain; its full sequence is Protein anon-37Cs (501 aa).

The protein resides in the cytoplasm. Functionally, has a non-vital function. The polypeptide is Protein anon-37Cs (anon-37Cs) (Drosophila simulans (Fruit fly)).